A 381-amino-acid polypeptide reads, in one-letter code: uncharacterized protein (381 aa).

Helical transmembrane passes span 10 to 29, 75 to 93, 98 to 117, 130 to 147, 157 to 179, 199 to 221, 236 to 255, 262 to 284, 289 to 311, 323 to 340, and 355 to 374; these read IFFSLFGIFIFSCINAINFY, IILISLSLLIICTINLIIL, LIKINFILINFGIFSYFTSR, YLFLACIILLWAGGNLMV, TNNTIVICALLYCINILTEFLHY, IELQLLTGFVVSYITLNILWYYE, LILKYIFLTICFAIIPICYI, YFANLSLNIILLICFILLPIHGT, NILYIILIGNCLGAIFICNILIL, ALLSYFSMCSIGIYAGAL, and LFSVFAVVGSFVTYHFWYFI.

It localises to the cell membrane. This is an uncharacterized protein from Rickettsia prowazekii (strain Madrid E).